A 170-amino-acid polypeptide reads, in one-letter code: ATP synthase subunit b (170 aa).

Residues 4 to 24 (ILLLGLALAPVALFASQGAVE) form a helical membrane-spanning segment.

It belongs to the ATPase B chain family. F-type ATPases have 2 components, F(1) - the catalytic core - and F(0) - the membrane proton channel. F(1) has five subunits: alpha(3), beta(3), gamma(1), delta(1), epsilon(1). F(0) has three main subunits: a(1), b(2) and c(10-14). The alpha and beta chains form an alternating ring which encloses part of the gamma chain. F(1) is attached to F(0) by a central stalk formed by the gamma and epsilon chains, while a peripheral stalk is formed by the delta and b chains.

The protein resides in the cell inner membrane. F(1)F(0) ATP synthase produces ATP from ADP in the presence of a proton or sodium gradient. F-type ATPases consist of two structural domains, F(1) containing the extramembraneous catalytic core and F(0) containing the membrane proton channel, linked together by a central stalk and a peripheral stalk. During catalysis, ATP synthesis in the catalytic domain of F(1) is coupled via a rotary mechanism of the central stalk subunits to proton translocation. Its function is as follows. Component of the F(0) channel, it forms part of the peripheral stalk, linking F(1) to F(0). This Aliarcobacter butzleri (strain RM4018) (Arcobacter butzleri) protein is ATP synthase subunit b.